A 465-amino-acid chain; its full sequence is Neuraminidase (465 aa).

The Intravirion segment spans residues 1-11 (MLPSTIQTLTL). Residues 12-34 (FLTSGGVLLSLYVSASLSYLLYS) form a helical membrane-spanning segment. Residues 13-35 (LTSGGVLLSLYVSASLSYLLYSD) form an involved in apical transport and lipid raft association region. Over 35 to 465 (DILLKFSPKI…DTVTGVDMAL (431 aa)) the chain is Virion surface. The hypervariable stalk region stretch occupies residues 38–85 (LKFSPKITAPTMTLDCTNASNVQAVNRSATKEMTFLLPEPEWTYPRLS). N-linked (GlcNAc...) asparagine; by host glycosylation is found at Asn55 and Asn63. Disulfide bonds link Cys86–Cys419, Cys121–Cys126, Cys181–Cys228, Cys230–Cys235, Cys276–Cys290, Cys278–Cys288, Cys317–Cys336, and Cys423–Cys446. The tract at residues 88–465 (GSTFQKALLI…DTVTGVDMAL (378 aa)) is head of neuraminidase. Arg115 contributes to the substrate binding site. Asn143 is a glycosylation site (N-linked (GlcNAc...) asparagine; by host). Asp148 (proton donor/acceptor) is an active-site residue. Arg149 is a substrate binding site. Residue 274–275 (EE) participates in substrate binding. Asn283 carries an N-linked (GlcNAc...) asparagine; by host glycan. Substrate is bound at residue Arg291. Asp292 lines the Ca(2+) pocket. The N-linked (GlcNAc...) asparagine; by host glycan is linked to Asn294. Asp323 lines the Ca(2+) pocket. Substrate is bound at residue Arg373. Tyr408 (nucleophile) is an active-site residue.

The protein belongs to the glycosyl hydrolase 34 family. Homotetramer. Ca(2+) is required as a cofactor. N-glycosylated.

The protein localises to the virion membrane. Its subcellular location is the host apical cell membrane. It catalyses the reaction Hydrolysis of alpha-(2-&gt;3)-, alpha-(2-&gt;6)-, alpha-(2-&gt;8)- glycosidic linkages of terminal sialic acid residues in oligosaccharides, glycoproteins, glycolipids, colominic acid and synthetic substrates.. With respect to regulation, inhibited by the neuraminidase inhibitors zanamivir (Relenza) and oseltamivir (Tamiflu). These drugs interfere with the release of progeny virus from infected cells and are effective against all influenza strains. Resistance to neuraminidase inhibitors is quite rare. In terms of biological role, catalyzes the removal of terminal sialic acid residues from viral and cellular glycoconjugates. Cleaves off the terminal sialic acids on the glycosylated HA during virus budding to facilitate virus release. Additionally helps virus spread through the circulation by further removing sialic acids from the cell surface. These cleavages prevent self-aggregation and ensure the efficient spread of the progeny virus from cell to cell. Otherwise, infection would be limited to one round of replication. Described as a receptor-destroying enzyme because it cleaves a terminal sialic acid from the cellular receptors. May facilitate viral invasion of the upper airways by cleaving the sialic acid moieties on the mucin of the airway epithelial cells. Likely to plays a role in the budding process through its association with lipid rafts during intracellular transport. May additionally display a raft-association independent effect on budding. Plays a role in the determination of host range restriction on replication and virulence. Sialidase activity in late endosome/lysosome traffic seems to enhance virus replication. The protein is Neuraminidase of Influenza B virus (strain B/Victoria/3/1985).